The chain runs to 210 residues: Large ribosomal subunit protein uL3 (210 aa).

This sequence belongs to the universal ribosomal protein uL3 family. Part of the 50S ribosomal subunit. Forms a cluster with proteins L14 and L19.

Functionally, one of the primary rRNA binding proteins, it binds directly near the 3'-end of the 23S rRNA, where it nucleates assembly of the 50S subunit. The protein is Large ribosomal subunit protein uL3 of Geobacter metallireducens (strain ATCC 53774 / DSM 7210 / GS-15).